The primary structure comprises 350 residues: Transmembrane protein 185B (350 aa).

The next 7 helical transmembrane spans lie at 16–36, 41–61, 81–101, 111–131, 168–188, 211–231, and 240–260; these read LIYACLLLFSVLLPLRLDGII, WAVFAPIWLWKLLVIVGASVG, FKAMLIAVGIHLLLLMFEILV, FWLLVFMPLFFVSPVSVAACV, WLVVFVPLWILMSFLCLVVLY, VTMAISWITIVVPLLIFEVLL, and TFSYISIFIPLWLSLLTLMAT.

Belongs to the TMEM185 family.

It is found in the membrane. The protein is Transmembrane protein 185B (Tmem185b) of Mus musculus (Mouse).